We begin with the raw amino-acid sequence, 81 residues long: Protein I5 homolog (81 aa).

The next 2 membrane-spanning stretches (helical) occupy residues 8–28 (LITI…FSLV) and 53–73 (MEIF…AAYI).

It belongs to the Chordopoxvirinae I5 family.

The protein localises to the virion membrane. The protein is Protein I5 homolog of Vertebrata (FPV).